The sequence spans 520 residues: Succinyl-CoA:3-ketoacid coenzyme A transferase 2A, mitochondrial (520 aa).

The transit peptide at 1–39 directs the protein to the mitochondrion; sequence MAALRLLAWAFSRRVSAHRPQPTLPHHLIRHYPTTRCGK. The tract at residues 280 to 299 is disordered; the sequence is ERLTTRDSPPAPGSKDQDPK. Glutamate 342 functions as the 5-glutamyl coenzyme A thioester intermediate in the catalytic mechanism.

The protein belongs to the 3-oxoacid CoA-transferase family. As to quaternary structure, homodimer. In terms of tissue distribution, expressed in flagella of epididymal sperm.

The protein resides in the mitochondrion. The enzyme catalyses a 3-oxo acid + succinyl-CoA = a 3-oxoacyl-CoA + succinate. The protein operates within ketone metabolism; succinyl-CoA degradation; acetoacetyl-CoA from succinyl-CoA: step 1/1. Its function is as follows. Key enzyme for ketone body catabolism. Transfers the CoA moiety from succinate to acetoacetate. Formation of the enzyme-CoA intermediate proceeds via an unstable anhydride species formed between the carboxylate groups of the enzyme and substrate. Probably play and important roles in the energy metabolism of spermatozoa. The chain is Succinyl-CoA:3-ketoacid coenzyme A transferase 2A, mitochondrial (Oxct2a) from Rattus norvegicus (Rat).